Here is a 443-residue protein sequence, read N- to C-terminus: Protein PRRC1 (443 aa).

The segment at 1 to 165 (MMEESGIETT…FSAPPVTGIL (165 aa)) is disordered. The segment covering 29-45 (EAHSAATSSFSSPNVSG) has biased composition (polar residues). The span at 59-72 (PSLPPVQPSAPPPF) shows a compositional bias: pro residues. 2 stretches are compositionally biased toward low complexity: residues 81 to 96 (VPLS…SPSP) and 109 to 134 (PPAT…FSVG). Ser-406 is modified (phosphoserine).

Belongs to the PRRC1 family. Interacts with PRKAR1A; resulting in PKA activation.

The protein localises to the golgi apparatus. The protein resides in the cytoplasm. Its function is as follows. May act as a regulator of the protein kinase A (PKA) during embryonic development. The protein is Protein PRRC1 (Prrc1) of Mus musculus (Mouse).